Reading from the N-terminus, the 1758-residue chain is Y' element ATP-dependent helicase YIL177C (1758 aa).

One can recognise a Helicase ATP-binding domain in the interval 668–845; the sequence is EIYMADTPSV…LQRIGLTGLA (178 aa). An ATP-binding site is contributed by 681–688; that stretch reads APPGYGKT. Residues 900–1051 form the Helicase C-terminal domain; sequence ALKLLLALFE…EFYGLESKKG (152 aa). A compositionally biased stretch (low complexity) spans 1142 to 1360; it reads NVRTNATTNA…ATTTESTNAS (219 aa). The segment at 1142–1384 is disordered; it reads NVRTNATTNA…RFHPVTDINK (243 aa). The span at 1361-1384 shows a compositional bias: basic and acidic residues; the sequence is AKEDANKDGNAEDNRFHPVTDINK.

This sequence belongs to the helicase family. Yeast subtelomeric Y' repeat subfamily.

Catalyzes DNA unwinding and is involved in telomerase-independent telomere maintenance. The sequence is that of Y' element ATP-dependent helicase YIL177C from Saccharomyces cerevisiae (strain ATCC 204508 / S288c) (Baker's yeast).